Here is a 255-residue protein sequence, read N- to C-terminus: CD320 antigen (255 aa).

Residues 1–29 form the signal peptide; that stretch reads MNGWVARGLARRAAALGLGLRVLLCFGLC. Residues 30–203 lie on the Extracellular side of the membrane; sequence LEIAPTPIQT…SVQSGNRNVY (174 aa). 2 LDL-receptor class A domains span residues 52–89 and 120–157; these read SCPP…EECG and SCPE…LGCG. Intrachain disulfides connect Cys-53/Cys-66, Cys-60/Cys-79, Cys-73/Cys-88, Cys-121/Cys-134, Cys-128/Cys-147, and Cys-141/Cys-156. Residues Trp-71, Asp-74, Asp-76, Asp-78, Asp-84, and Glu-85 each coordinate Ca(2+). Ca(2+) is bound by residues Trp-139, Asp-142, His-144, Asp-146, Asp-152, and Glu-153. N-linked (GlcNAc...) asparagine glycosylation is found at Asn-177 and Asn-183. A helical transmembrane segment spans residues 204–224; sequence GIIAAVAVLSISLAAGILFAL. At 225 to 255 the chain is on the cytoplasmic side; it reads SRLCAQGCLAPLGLLVSMKGSLQPEKKTSVL.

As to quaternary structure, interacts (via LDL-receptor class A domains) with TCN2.

It localises to the cell membrane. In terms of biological role, receptor for transcobalamin saturated with cobalamin (TCbl). Plays an important role in cobalamin uptake. Plasma membrane protein that is expressed on follicular dendritic cells (FDC) and mediates interaction with germinal center B cells. Functions as a costimulator to promote B cell responses to antigenic stimuli; promotes B cell differentiation and proliferation. Germinal center-B (GC-B) cells differentiate into memory B-cells and plasma cells (PC) through interaction with T-cells and follicular dendritic cells (FDC). CD320 augments the proliferation of PC precursors generated by IL-10. This Bos taurus (Bovine) protein is CD320 antigen (CD320).